The chain runs to 417 residues: GTP-binding protein YPT11 (417 aa).

The segment at 1 to 34 (MSQRKRYSLNVVTSPSIPSPTPSAPIRTNESNWE) is disordered. GTP contacts are provided by residues 97-104 (GDANVGKT), 228-232 (DTAGQ), and 292-295 (NKID). S-geranylgeranyl cysteine attachment occurs at residues Cys-415 and Cys-416.

The protein belongs to the small GTPase superfamily. Rab family. Interacts with MYO2 (via C-terminal tail domain). Interacts with YIF1, YIP3, YIP4 and YIP5.

Its subcellular location is the endoplasmic reticulum membrane. It is found in the bud tip. The protein localises to the bud neck. Involved in the positive control of both endoplasmic reticulum (ER) and mitochondrion inheritance during cell divison. Required for the MYO2-dependent retention of newly inherited mitochondria at the bud tip in developing daughter cells. The sequence is that of GTP-binding protein YPT11 (YPT11) from Saccharomyces cerevisiae (strain RM11-1a) (Baker's yeast).